An 891-amino-acid polypeptide reads, in one-letter code: Alanine--tRNA ligase (891 aa).

Histidine 564, histidine 568, cysteine 677, and histidine 681 together coordinate Zn(2+).

Belongs to the class-II aminoacyl-tRNA synthetase family. Zn(2+) is required as a cofactor.

The protein localises to the cytoplasm. It catalyses the reaction tRNA(Ala) + L-alanine + ATP = L-alanyl-tRNA(Ala) + AMP + diphosphate. Catalyzes the attachment of alanine to tRNA(Ala) in a two-step reaction: alanine is first activated by ATP to form Ala-AMP and then transferred to the acceptor end of tRNA(Ala). Also edits incorrectly charged Ser-tRNA(Ala) and Gly-tRNA(Ala) via its editing domain. This is Alanine--tRNA ligase from Bradyrhizobium sp. (strain ORS 278).